The following is a 1156-amino-acid chain: Reverse gyrase 1 (1156 aa).

The RG N-terminal-type zinc finger occupies 1–38; sequence MLKVYYTFGCPNCGGPIDDEHLLAGVPCSKCLPGRVEN. Residues Cys-10, Cys-13, Cys-28, and Cys-31 each coordinate Zn(2+). ATP-binding positions include Gln-86 and 103–110; that span reads APTGLGKT. The Helicase ATP-binding domain maps to 90-277; sequence IKRLAKSESF…ALRTLIGFEP (188 aa). Positions 184–187 match the DEAD box motif; it reads DDSD. A topoisomerase I region spans residues 570 to 1156; that stretch reads INIKTILLIV…VNSLKLDTNV (587 aa). The 163-residue stretch at 574 to 736 folds into the Toprim domain; it reads TILLIVESPT…NIYRIKYHEI (163 aa). A Mg(2+)-binding site is contributed by Glu-580. Residues 655–682 form an RG C-terminal-type zinc finger; sequence IYKCYNCGKTFTIKSNTCPYCGSVFISS. Cys-658, Cys-661, Cys-672, and Cys-675 together coordinate Zn(2+). Asp-705 serves as a coordination point for Mg(2+). Positions 752–1143 constitute a Topo IA-type catalytic domain; the sequence is NMNLVKSQIV…DLHKEITQIS (392 aa). Tyr-895 (O-(5'-phospho-DNA)-tyrosine intermediate) is an active-site residue.

In the N-terminal section; belongs to the DEAD box helicase family. DDVD subfamily. This sequence in the C-terminal section; belongs to the type IA topoisomerase family. In terms of assembly, monomer. Requires Zn(2+) as cofactor. It depends on Mg(2+) as a cofactor.

It localises to the cytoplasm. The enzyme catalyses ATP + H2O = ADP + phosphate + H(+). Its function is as follows. Modifies the topological state of DNA by introducing positive supercoils in an ATP-dependent process, increasing the linking number in steps of +1. Binds to single-stranded DNA, transiently cleaves and then rejoins the ends, introducing a positive supercoil in the process. The scissile phosphodiester is attacked by the catalytic tyrosine of the enzyme, resulting in the formation of a DNA-(5'-phosphotyrosyl)-enzyme intermediate. Probably involved in rewinding DNA strands in regions of the chromosome that have opened up to allow replication, transcription, DNA repair and/or for DNA protection. The protein is Reverse gyrase 1 of Sulfurisphaera tokodaii (strain DSM 16993 / JCM 10545 / NBRC 100140 / 7) (Sulfolobus tokodaii).